Reading from the N-terminus, the 177-residue chain is Bifunctional protein PyrR (177 aa).

The PRPP-binding signature appears at 99–111 (VVLVDDVLFTGRT).

The protein belongs to the purine/pyrimidine phosphoribosyltransferase family. PyrR subfamily.

It carries out the reaction UMP + diphosphate = 5-phospho-alpha-D-ribose 1-diphosphate + uracil. Regulates the transcription of the pyrimidine nucleotide (pyr) operon in response to exogenous pyrimidines. Its function is as follows. Also displays a weak uracil phosphoribosyltransferase activity which is not physiologically significant. The chain is Bifunctional protein PyrR from Geobacter sp. (strain M21).